Consider the following 327-residue polypeptide: Meiotic coiled-coil protein 6 (327 aa).

The stretch at Asp-66–Lys-188 forms a coiled coil. Over residues Arg-175–Lys-199 the composition is skewed to basic and acidic residues. Residues Arg-175–Ile-234 form a disordered region. Residues Ser-202 to Leu-212 are compositionally biased toward low complexity. The span at Pro-217–Ser-232 shows a compositional bias: polar residues. Residues Asn-243–Asn-297 adopt a coiled-coil conformation.

In terms of assembly, interacts with alp4, kms1 and mbo1.

It is found in the nucleus. The protein resides in the cytoplasm. Its subcellular location is the cytoskeleton. The protein localises to the microtubule organizing center. It localises to the spindle pole body. Its function is as follows. Has a role in meiotic nuclear oscillation and recombination. Required to remodel astral microtubules into the 'horsetail' astral array maintaining the 'horsetail' nuclear movement. Promotes homologous paring of chromosomes during this movement. This chain is Meiotic coiled-coil protein 6 (mcp6), found in Schizosaccharomyces pombe (strain 972 / ATCC 24843) (Fission yeast).